We begin with the raw amino-acid sequence, 530 residues long: Carbohydrate sulfotransferase 2 (530 aa).

Residues 1 to 20 (MSRSSPRALPPGALPRPLPA) are disordered. Topologically, residues 1–54 (MSRSSPRALPPGALPRPLPAAPAAVQRALLPPWPRRAGRRWPASPLGMKVFRRK) are cytoplasmic. The segment covering 8–20 (ALPPGALPRPLPA) has biased composition (pro residues). Residues 55–75 (ALVLCAGYALLLVLTMLNLLD) form a helical; Signal-anchor for type II membrane protein membrane-spanning segment. At 76-530 (YKWHKEPLQQ…SKTLLRKPRL (455 aa)) the chain is on the lumenal side. The disordered stretch occupies residues 97 to 128 (GAAGAGWGRPGSPPAAPPRAHSRMDPRTPYRP). 173 to 179 (WRSGSSF) provides a ligand contact to 3'-phosphoadenylyl sulfate. N-linked (GlcNAc...) asparagine glycosylation occurs at Asn-243. 332-340 (RDPRAVASS) serves as a coordination point for 3'-phosphoadenylyl sulfate. N-linked (GlcNAc...) asparagine glycans are attached at residues Asn-457 and Asn-475.

It belongs to the sulfotransferase 1 family. Gal/GlcNAc/GalNAc subfamily. Homodimer; disulfide-linked. Homodimerization is not essential for enzyme activity. In terms of tissue distribution, in brain, it is expressed in pyramidal cells in the CA3 subregion of the hippocampus, cerebellar nucleus and Purkinje cells. Expressed in peripheral lymph nodes.

It is found in the golgi apparatus. Its subcellular location is the trans-Golgi network membrane. It catalyses the reaction 3-O-{N-acetyl-beta-D-glucosaminyl-(1-&gt;3)-beta-D-galactosyl-(1-&gt;3)-N-acetyl-alpha-D-galactosaminyl}-L-threonyl-[protein] + 3'-phosphoadenylyl sulfate = 3-O-{6-O-sulfo-N-acetyl-beta-D-glucosaminyl-(1-&gt;3)-beta-D-galactosyl-(1-&gt;3)-N-acetyl-alpha-D-galactosaminyl}-L-threonyl-[protein] + adenosine 3',5'-bisphosphate + H(+). The catalysed reaction is 3-O-{N-acetyl-beta-D-glucosaminyl-(1-&gt;3)-beta-D-galactosyl-(1-&gt;3)-N-acetyl-alpha-D-galactosaminyl}-L-seryl-[protein] + 3'-phosphoadenylyl sulfate = 3-O-{6-O-sulfo-N-acetyl-beta-D-glucosaminyl-(1-&gt;3)-beta-D-galactosyl-(1-&gt;3)-N-acetyl-alpha-D-galactosaminyl}-L-seryl-[protein] + adenosine 3',5'-bisphosphate + H(+). It carries out the reaction a 3-O-{beta-D-galactosyl-(1-&gt;3)-[N-acetyl-beta-D-glucosaminyl-(1-&gt;6)]-N-acetyl-alpha-D-galactosaminyl}-L-threonyl-[protein] + 3'-phosphoadenylyl sulfate = 3-O-{beta-D-galactosyl-(1-&gt;3)-[6-O-sulfo-N-acetyl-beta-D-glucosaminyl-(1-&gt;6)]-N-acetyl-alpha-D-galactosaminyl}-L-threonyl-[protein] + adenosine 3',5'-bisphosphate + H(+). The enzyme catalyses 3-O-{beta-D-galactosyl-(1-&gt;3)-[N-acetyl-beta-D-glucosaminyl-(1-&gt;6)]-N-acetyl-alpha-D-galactosaminyl}-L-seryl-[protein] + 3'-phosphoadenylyl sulfate = 3-O-{beta-D-galactosyl-(1-&gt;3)-[6-O-sulfo-N-acetyl-beta-D-glucosaminyl-(1-&gt;6)]-N-acetyl-alpha-D-galactosaminyl}-L-seryl-[protein] + adenosine 3',5'-bisphosphate + H(+). The protein operates within protein modification; carbohydrate sulfation. Functionally, sulfotransferase that utilizes 3'-phospho-5'-adenylyl sulfate (PAPS) as sulfonate donor to catalyze the transfer of sulfate to position 6 of non-reducing N-acetylglucosamine (GlcNAc) residues within keratan-like structures on N-linked glycans and within mucin-associated glycans that can ultimately serve as SELL ligands. SELL ligands are present in high endothelial cells (HEVs) and play a central role in lymphocyte homing at sites of inflammation. Participates in biosynthesis of the SELL ligand sialyl 6-sulfo Lewis X and in lymphocyte homing to Peyer patches. Has no activity toward O-linked sugars. Its substrate specificity may be influenced by its subcellular location. Sulfates GlcNAc residues at terminal, non-reducing ends of oligosaccharide chains. The chain is Carbohydrate sulfotransferase 2 (Chst2) from Mus musculus (Mouse).